A 254-amino-acid polypeptide reads, in one-letter code: Serotonin N-acetyltransferase 1, chloroplastic (254 aa).

Residues 1 to 74 (MAPAASASAS…LRSGFLKSNN (74 aa)) constitute a chloroplast transit peptide. Residues 111-254 (IIFSSAGDVN…IKGMFWYPRF (144 aa)) form the N-acetyltransferase domain.

This sequence belongs to the acetyltransferase family. In terms of tissue distribution, expressed in roots and shoots.

The protein resides in the plastid. It is found in the chloroplast. The protein localises to the nucleus. It carries out the reaction serotonin + acetyl-CoA = N-acetylserotonin + CoA + H(+). The catalysed reaction is tyramine + acetyl-CoA = N-acetyltyramine + CoA + H(+). It catalyses the reaction tryptamine + acetyl-CoA = N-acetyltryptamine + CoA + H(+). The enzyme catalyses 5-methoxytryptamine + acetyl-CoA = melatonin + CoA + H(+). The protein operates within aromatic compound metabolism; melatonin biosynthesis; melatonin from serotonin: step 1/2. Catalyzes the N-acetylation of serotonin into N-acetylserotonin, the penultimate step in the synthesis of melatonin. Catalyzes in vitro the N-acetylation of tryptamine to produce N-acetyltryptamine, 5-methoxytryptamine to produce melatonin and tyramine to produce N-acetyltyramine. This chain is Serotonin N-acetyltransferase 1, chloroplastic, found in Oryza sativa subsp. japonica (Rice).